The primary structure comprises 427 residues: Glutamate-1-semialdehyde 2,1-aminomutase 2 (427 aa).

N6-(pyridoxal phosphate)lysine is present on K267.

It belongs to the class-III pyridoxal-phosphate-dependent aminotransferase family. HemL subfamily. In terms of assembly, homodimer. Pyridoxal 5'-phosphate serves as cofactor.

The protein resides in the cytoplasm. It carries out the reaction (S)-4-amino-5-oxopentanoate = 5-aminolevulinate. It functions in the pathway porphyrin-containing compound metabolism; protoporphyrin-IX biosynthesis; 5-aminolevulinate from L-glutamyl-tRNA(Glu): step 2/2. The sequence is that of Glutamate-1-semialdehyde 2,1-aminomutase 2 from Staphylococcus saprophyticus subsp. saprophyticus (strain ATCC 15305 / DSM 20229 / NCIMB 8711 / NCTC 7292 / S-41).